The sequence spans 249 residues: Type III pantothenate kinase (249 aa).

Aspartate 8–lysine 15 is an ATP binding site. Residues tyrosine 95 and glycine 102–arginine 105 each bind substrate. Residue aspartate 104 is the Proton acceptor of the active site. Aspartate 125 lines the K(+) pocket. Threonine 128 provides a ligand contact to ATP. Threonine 179 lines the substrate pocket.

This sequence belongs to the type III pantothenate kinase family. In terms of assembly, homodimer. The cofactor is NH4(+). It depends on K(+) as a cofactor.

It is found in the cytoplasm. The enzyme catalyses (R)-pantothenate + ATP = (R)-4'-phosphopantothenate + ADP + H(+). It functions in the pathway cofactor biosynthesis; coenzyme A biosynthesis; CoA from (R)-pantothenate: step 1/5. Catalyzes the phosphorylation of pantothenate (Pan), the first step in CoA biosynthesis. The polypeptide is Type III pantothenate kinase (Alkalilimnicola ehrlichii (strain ATCC BAA-1101 / DSM 17681 / MLHE-1)).